The sequence spans 365 residues: Peptide chain release factor 2 (365 aa).

Gln252 is modified (N5-methylglutamine).

The protein belongs to the prokaryotic/mitochondrial release factor family. Methylated by PrmC. Methylation increases the termination efficiency of RF2.

It localises to the cytoplasm. Functionally, peptide chain release factor 2 directs the termination of translation in response to the peptide chain termination codons UGA and UAA. This chain is Peptide chain release factor 2, found in Escherichia coli O9:H4 (strain HS).